The chain runs to 147 residues: Nucleoside diphosphate kinase (147 aa).

Positions 9, 57, 85, 91, 102, and 112 each coordinate ATP. The Pros-phosphohistidine intermediate role is filled by histidine 115.

It belongs to the NDK family. Homotetramer. Requires Mg(2+) as cofactor.

It is found in the cytoplasm. It catalyses the reaction a 2'-deoxyribonucleoside 5'-diphosphate + ATP = a 2'-deoxyribonucleoside 5'-triphosphate + ADP. The catalysed reaction is a ribonucleoside 5'-diphosphate + ATP = a ribonucleoside 5'-triphosphate + ADP. Major role in the synthesis of nucleoside triphosphates other than ATP. The ATP gamma phosphate is transferred to the NDP beta phosphate via a ping-pong mechanism, using a phosphorylated active-site intermediate. This chain is Nucleoside diphosphate kinase, found in Listeria innocua serovar 6a (strain ATCC BAA-680 / CLIP 11262).